Consider the following 47-residue polypeptide: Large ribosomal subunit protein bL33C (47 aa).

It belongs to the bacterial ribosomal protein bL33 family.

This Staphylococcus epidermidis (strain ATCC 35984 / DSM 28319 / BCRC 17069 / CCUG 31568 / BM 3577 / RP62A) protein is Large ribosomal subunit protein bL33C.